A 129-amino-acid chain; its full sequence is Small ribosomal subunit protein uS11 (129 aa).

The protein belongs to the universal ribosomal protein uS11 family. In terms of assembly, part of the 30S ribosomal subunit. Interacts with proteins S7 and S18. Binds to IF-3.

Functionally, located on the platform of the 30S subunit, it bridges several disparate RNA helices of the 16S rRNA. Forms part of the Shine-Dalgarno cleft in the 70S ribosome. The protein is Small ribosomal subunit protein uS11 of Mesorhizobium japonicum (strain LMG 29417 / CECT 9101 / MAFF 303099) (Mesorhizobium loti (strain MAFF 303099)).